A 109-amino-acid chain; its full sequence is Mitochondrial pyruvate carrier 1 (109 aa).

Position 2 is an N-acetylalanine (Ala-2). The Mitochondrial matrix segment spans residues 2-20 (AGALVRKAADYVRSKDFRD). The helical transmembrane segment at 21-41 (YLMSTHFWGPVANWGLPIAAI) threads the bilayer. Residues 42–52 (NDMKKSPEIIS) are Mitochondrial intermembrane-facing. A helical transmembrane segment spans residues 53-71 (GRMTFALCCYSLTFMRFAY). At Lys-72 the chain carries N6-acetyllysine. Residues 72-109 (KVQPRNWLLFACHVTNEVAQLIQGGRLINYEMSKRPSA) are Mitochondrial matrix-facing.

The protein belongs to the mitochondrial pyruvate carrier (MPC) (TC 2.A.105) family. In terms of assembly, homodimer. Forms heterodimer with MPC2. The heterodimer is the more stable and dominant form.

The protein localises to the mitochondrion inner membrane. It carries out the reaction pyruvate(out) + H(+)(out) = pyruvate(in) + H(+)(in). Functionally, mediates the uptake of pyruvate into mitochondria. The polypeptide is Mitochondrial pyruvate carrier 1 (Mpc1) (Mus musculus (Mouse)).